A 406-amino-acid chain; its full sequence is Bifunctional enzyme IspD/IspF (406 aa).

A 2-C-methyl-D-erythritol 4-phosphate cytidylyltransferase region spans residues 1-247 (MSLIRVNGEA…TPFFNPAKDT (247 aa)). The tract at residues 248–406 (FIGMGFDTHA…HASMRYKQKL (159 aa)) is 2-C-methyl-D-erythritol 2,4-cyclodiphosphate synthase. A divalent metal cation-binding residues include Asp-254 and His-256. 4-CDP-2-C-methyl-D-erythritol 2-phosphate is bound by residues 254-256 (DTH) and 280-281 (HS). Position 288 (His-288) interacts with a divalent metal cation. Residues 302–304 (DIG), 307–311 (FPDND), 378–381 (TTME), and Phe-385 contribute to the 4-CDP-2-C-methyl-D-erythritol 2-phosphate site.

This sequence in the N-terminal section; belongs to the IspD/TarI cytidylyltransferase family. IspD subfamily. The protein in the C-terminal section; belongs to the IspF family. A divalent metal cation is required as a cofactor.

The enzyme catalyses 2-C-methyl-D-erythritol 4-phosphate + CTP + H(+) = 4-CDP-2-C-methyl-D-erythritol + diphosphate. It catalyses the reaction 4-CDP-2-C-methyl-D-erythritol 2-phosphate = 2-C-methyl-D-erythritol 2,4-cyclic diphosphate + CMP. Its pathway is isoprenoid biosynthesis; isopentenyl diphosphate biosynthesis via DXP pathway; isopentenyl diphosphate from 1-deoxy-D-xylulose 5-phosphate: step 2/6. It functions in the pathway isoprenoid biosynthesis; isopentenyl diphosphate biosynthesis via DXP pathway; isopentenyl diphosphate from 1-deoxy-D-xylulose 5-phosphate: step 4/6. Bifunctional enzyme that catalyzes the formation of 4-diphosphocytidyl-2-C-methyl-D-erythritol from CTP and 2-C-methyl-D-erythritol 4-phosphate (MEP) (IspD), and catalyzes the conversion of 4-diphosphocytidyl-2-C-methyl-D-erythritol 2-phosphate (CDP-ME2P) to 2-C-methyl-D-erythritol 2,4-cyclodiphosphate (ME-CPP) with a corresponding release of cytidine 5-monophosphate (CMP) (IspF). The sequence is that of Bifunctional enzyme IspD/IspF from Helicobacter acinonychis (strain Sheeba).